Here is a 407-residue protein sequence, read N- to C-terminus: tRNA pseudouridine synthase 4 (407 aa).

Residues 83-105 (FRPAPPHPNDRNRRRRKSNRLPD) are disordered. The active-site Nucleophile is the aspartate 115. A disordered region spans residues 274–298 (TEQDINPQDGDEKINAKSPTTNSVT). Serine 291 is subject to Phosphoserine. Threonine 293 carries the phosphothreonine modification. Residue serine 296 is modified to Phosphoserine. At threonine 406 the chain carries Phosphothreonine.

The protein belongs to the pseudouridine synthase TruB family.

It is found in the nucleus. The protein resides in the mitochondrion. It catalyses the reaction uridine(55) in tRNA = pseudouridine(55) in tRNA. The enzyme catalyses a uridine in mRNA = a pseudouridine in mRNA. Its function is as follows. Responsible for synthesis of pseudouridine from uracil-55 in the psi GC loop of transfer RNAs. Also catalyzes pseudouridylation of mRNAs with the consensus sequence 5'-GGUUCRA-3'. This is tRNA pseudouridine synthase 4 from Schizosaccharomyces pombe (strain 972 / ATCC 24843) (Fission yeast).